We begin with the raw amino-acid sequence, 99 residues long: Nucleoid-associated protein SZO_16661 (99 aa).

The protein belongs to the YbaB/EbfC family. As to quaternary structure, homodimer.

The protein localises to the cytoplasm. Its subcellular location is the nucleoid. Binds to DNA and alters its conformation. May be involved in regulation of gene expression, nucleoid organization and DNA protection. This chain is Nucleoid-associated protein SZO_16661, found in Streptococcus equi subsp. zooepidemicus (strain H70).